Here is a 158-residue protein sequence, read N- to C-terminus: Transcription elongation factor GreA (158 aa).

Residues 10-76 (TLEGKKKLEE…QIEKMIRNAE (67 aa)) adopt a coiled-coil conformation.

It belongs to the GreA/GreB family.

Necessary for efficient RNA polymerase transcription elongation past template-encoded arresting sites. The arresting sites in DNA have the property of trapping a certain fraction of elongating RNA polymerases that pass through, resulting in locked ternary complexes. Cleavage of the nascent transcript by cleavage factors such as GreA or GreB allows the resumption of elongation from the new 3'terminus. GreA releases sequences of 2 to 3 nucleotides. The polypeptide is Transcription elongation factor GreA (Halalkalibacterium halodurans (strain ATCC BAA-125 / DSM 18197 / FERM 7344 / JCM 9153 / C-125) (Bacillus halodurans)).